The sequence spans 889 residues: DNA mismatch repair protein MutS (889 aa).

641-648 (GPNMAGKS) lines the ATP pocket.

The protein belongs to the DNA mismatch repair MutS family.

In terms of biological role, this protein is involved in the repair of mismatches in DNA. It is possible that it carries out the mismatch recognition step. This protein has a weak ATPase activity. The sequence is that of DNA mismatch repair protein MutS from Orientia tsutsugamushi (strain Ikeda) (Rickettsia tsutsugamushi).